The primary structure comprises 506 residues: Histidine ammonia-lyase (506 aa).

A cross-link (5-imidazolinone (Ala-Gly)) is located at residues 143 to 145 (ASG). Position 144 is a 2,3-didehydroalanine (Ser) (Ser-144).

Belongs to the PAL/histidase family. In terms of processing, contains an active site 4-methylidene-imidazol-5-one (MIO), which is formed autocatalytically by cyclization and dehydration of residues Ala-Ser-Gly.

It localises to the cytoplasm. The enzyme catalyses L-histidine = trans-urocanate + NH4(+). It participates in amino-acid degradation; L-histidine degradation into L-glutamate; N-formimidoyl-L-glutamate from L-histidine: step 1/3. In Salmonella agona (strain SL483), this protein is Histidine ammonia-lyase.